A 261-amino-acid polypeptide reads, in one-letter code: Succinate dehydrogenase iron-sulfur subunit (261 aa).

A disordered region spans residues 1–23 (MAELRLPPNSVVKKGKEHKEQEE). The 2Fe-2S ferredoxin-type domain occupies 28–119 (RKVKIYRYDP…DIKIYPLPHM (92 aa)). Residues C80, C85, and C100 each contribute to the [2Fe-2S] cluster site. The region spanning 161 to 191 (GREKLDGLYECILCACCSTSCPSYWWNGDKY) is the 4Fe-4S ferredoxin-type domain. The [4Fe-4S] cluster site is built by C171, C174, and C177. Residue C181 participates in [3Fe-4S] cluster binding. Position 186 (W186) interacts with a ubiquinone. 2 residues coordinate [3Fe-4S] cluster: C228 and C234. C238 is a binding site for [4Fe-4S] cluster.

It belongs to the succinate dehydrogenase/fumarate reductase iron-sulfur protein family. In terms of assembly, part of an enzyme complex containing four subunits: a flavoprotein, an iron-sulfur, cytochrome b-556, and a hydrophobic anchor protein. Requires [2Fe-2S] cluster as cofactor. The cofactor is [3Fe-4S] cluster. [4Fe-4S] cluster serves as cofactor.

The catalysed reaction is a quinone + succinate = fumarate + a quinol. It functions in the pathway carbohydrate metabolism; tricarboxylic acid cycle; fumarate from succinate (bacterial route): step 1/1. This chain is Succinate dehydrogenase iron-sulfur subunit (sdhB), found in Rickettsia felis (strain ATCC VR-1525 / URRWXCal2) (Rickettsia azadi).